A 379-amino-acid chain; its full sequence is Chaperone protein DnaJ (379 aa).

The 66-residue stretch at 5-70 folds into the J domain; it reads DYYEILGVPK…QKRAAYDQYG (66 aa). A CR-type zinc finger spans residues 134-212; sequence GVTKEIRIPT…CHGHGRIEKT (79 aa). Cys-147, Cys-150, Cys-164, Cys-167, Cys-186, Cys-189, Cys-200, and Cys-203 together coordinate Zn(2+). CXXCXGXG motif repeat units lie at residues 147–154, 164–171, 186–193, and 200–207; these read CEVCHGSG, CPTCHGAG, CPHCQGRG, and CNSCHGHG.

The protein belongs to the DnaJ family. As to quaternary structure, homodimer. Zn(2+) serves as cofactor.

The protein resides in the cytoplasm. Its function is as follows. Participates actively in the response to hyperosmotic and heat shock by preventing the aggregation of stress-denatured proteins and by disaggregating proteins, also in an autonomous, DnaK-independent fashion. Unfolded proteins bind initially to DnaJ; upon interaction with the DnaJ-bound protein, DnaK hydrolyzes its bound ATP, resulting in the formation of a stable complex. GrpE releases ADP from DnaK; ATP binding to DnaK triggers the release of the substrate protein, thus completing the reaction cycle. Several rounds of ATP-dependent interactions between DnaJ, DnaK and GrpE are required for fully efficient folding. Also involved, together with DnaK and GrpE, in the DNA replication of plasmids through activation of initiation proteins. The sequence is that of Chaperone protein DnaJ from Cronobacter sakazakii (strain ATCC BAA-894) (Enterobacter sakazakii).